The primary structure comprises 351 residues: MTKISKIIDELNNQQADAAWITTPLNVYYFTGYRSEPHERLFALLIKKDGKQVLFCPKMEVEEVKASPFTGEIVGYLDTENPFSLYPQTINKLLIESEHLTVARQKQLISGFNVNSFGDVDLTIKQLRNIKSEDEISKIRKAAELADKCIEIGVSYLKEGVTEREVVNHIEQTIKQYGVNEMSFDTMVLFGDHAASPHGTPGDRRLKSNEYVLFDLGVIYEHYCSDMTRTIKFGEPSKEAQEIYNIVLEAETSAIQAIKPGIPLKDIDHIARNIISEKGYGEYFPHRLGHGLGLQEHEYQDVSSTNSNLLEAGMVITIEPGIYVPGVAGVRIEDDILVTNEGYEVLTHYEK.

Positions 215, 226, 290, 319, and 333 each coordinate Mn(2+).

It belongs to the peptidase M24B family. Mn(2+) is required as a cofactor.

This is an uncharacterized protein from Staphylococcus aureus (strain MSSA476).